Here is a 365-residue protein sequence, read N- to C-terminus: MSKNVVSLVKDDSDKKKALDAALSQIERSFGKGSIMRLGKNEQIVEIESVSTGSLGLDIALGIGGLPRGRIIEIYGPESSGKTTLALQTVAEAQKSGGVCAFVDAEHALDPIYARKLGVQLDDLLISQPDTGEQALEIADTLVRSGAVDVLVIDSVAALTPKAELEGEMGDSLPGLQARLMSQALRKLTGSISKSNTMVIFINQIRMKIGVMFGSPETTTGGNALKFYASVRLDIRRIGAIKDRDEVVGNQTRVKVVKNKVAPPFKQVEFDIMYGEGISKMGELVDLGSKAGIVEKSGSWFSYNSQRIGQGRENAKQFLRDNPEMAAEIEAAIRANAGLIAEKIMDVPGSERDGDEDAGDMEASA.

76–83 contacts ATP; that stretch reads GPESSGKT. A disordered region spans residues 346–365; the sequence is DVPGSERDGDEDAGDMEASA. Residues 353-365 show a composition bias toward acidic residues; it reads DGDEDAGDMEASA.

Belongs to the RecA family.

Its subcellular location is the cytoplasm. Functionally, can catalyze the hydrolysis of ATP in the presence of single-stranded DNA, the ATP-dependent uptake of single-stranded DNA by duplex DNA, and the ATP-dependent hybridization of homologous single-stranded DNAs. It interacts with LexA causing its activation and leading to its autocatalytic cleavage. The polypeptide is Protein RecA (Parvibaculum lavamentivorans (strain DS-1 / DSM 13023 / NCIMB 13966)).